Consider the following 1907-residue polypeptide: Chromatin modification-related protein EAF1 B (1907 aa).

4 disordered regions span residues 108-208 (ASPH…TDLV), 261-287 (NRVSSNSLNTKVDGEPVVRESTAGSKT), 323-373 (GGSP…SHAN), and 449-469 (NQSHRSTAEMQTKEKSSETEK). The segment covering 140-151 (SENKSVEGERNL) has biased composition (basic and acidic residues). 3 stretches are compositionally biased toward polar residues: residues 261–270 (NRVSSNSLNT), 333–342 (GQKNSSTQLN), and 355–372 (TNRGATGTNGLESESSHA). Residues 563–641 (CGTAPVEVRE…LSYAILQFWS (79 aa)) enclose the HSA domain. 2 disordered regions span residues 836 to 909 (SSSL…AVQK) and 928 to 952 (AETSGKPKKKKKTHQGSAYDQTWHL). The segment covering 856–866 (RRVRTASRHRV) has biased composition (basic residues). Composition is skewed to polar residues over residues 884-898 (TDASSGDTSSFQDEY) and 942-952 (QGSAYDQTWHL). An SANT domain is found at 1049 to 1105 (SGNPWSLFEDQALVVLVHDMGPNWELISDAMNSTLKIKYIYRNPTECKDRHKILMDK). Disordered stretches follow at residues 1107 to 1131 (AGDGADSAEDSGNSQSYPSTLPGIP), 1235 to 1266 (PVLPTSGAHPSTPGSSGVVLSNNLPTTSGLQS), 1296 to 1319 (LSGRNLQQPSLSTPAAVSGSDRGH), 1429 to 1465 (GHLSQQHQMSPQSHVLGNSHHPHLQSPSQATGAQQEA), 1477 to 1594 (YLQQ…QQLN), 1638 to 1703 (VRPD…SPAT), 1767 to 1791 (VPQSVTNTTQTASMGTTKGMPQASN), and 1824 to 1907 (VNNS…TKVE). Polar residues-rich tracts occupy residues 1116–1125 (DSGNSQSYPS), 1242–1266 (AHPSTPGSSGVVLSNNLPTTSGLQS), 1296–1310 (LSGRNLQQPSLSTPA), 1431–1444 (LSQQHQMSPQSHVL), and 1453–1462 (QSPSQATGAQ). Positions 1493–1512 (PHVQQPQGSSVSSSSQNSPQ) are enriched in low complexity. A compositionally biased stretch (pro residues) spans 1513-1529 (TQPPVSPQPLSMPPVSP). Composition is skewed to polar residues over residues 1532–1545 (NINAMAQQKPQKSQ), 1554–1568 (SPQSGTSGVNNQAGK), 1585–1594 (RQPTQGQQLN), 1640–1655 (PDQQSSVGTTTSTDLQ), 1662–1672 (PLSSNHSQQLP), 1681–1703 (PSPQQQMQLHSDNSIQGQSSPAT), 1769–1782 (QSVTNTTQTASMGT), and 1824–1844 (VNNSNTDSAGNDPVSTPNQGL). Composition is skewed to basic and acidic residues over residues 1863–1872 (SEEKRPKLPE) and 1882–1892 (LASEEQPHLEE).

The protein belongs to the EAF1 family. As to quaternary structure, component of the NuA4 histone acetyltransferase complex. Interacts with ARP4 and SWC4, and (via HSA domain) with TAF14 and TAF14B. Expressed in leaves.

The protein resides in the nucleus. Component of the NuA4 histone acetyltransferase complex which is involved in transcriptional activation of selected genes principally by acetylation of nucleosomal histone H4 and H2A. This is Chromatin modification-related protein EAF1 B (EAF1B) from Arabidopsis thaliana (Mouse-ear cress).